Reading from the N-terminus, the 567-residue chain is Nucleolus and neural progenitor protein (567 aa).

At Ser265 the chain carries Phosphoserine. The segment at 437 to 457 (SKHHLRQRRSQNKFLRRQRKP) is disordered. Positions 442–460 (RQRRSQNKFLRRQRKPQRK) are nuclear localization signal.

It belongs to the nepro family.

It localises to the nucleus. Its subcellular location is the nucleolus. May play a role in cortex development as part of the Notch signaling pathway. Downstream of Notch may repress the expression of proneural genes and inhibit neuronal differentiation thereby maintaining neural progenitors. May also play a role in preimplentation embryo development. In Homo sapiens (Human), this protein is Nucleolus and neural progenitor protein.